The following is a 149-amino-acid chain: Deoxyuridine 5'-triphosphate nucleotidohydrolase (149 aa).

Residues 68–70 (RSG), N81, 85–87 (LID), and M95 contribute to the substrate site.

This sequence belongs to the dUTPase family. Requires Mg(2+) as cofactor.

The catalysed reaction is dUTP + H2O = dUMP + diphosphate + H(+). It functions in the pathway pyrimidine metabolism; dUMP biosynthesis; dUMP from dCTP (dUTP route): step 2/2. Functionally, this enzyme is involved in nucleotide metabolism: it produces dUMP, the immediate precursor of thymidine nucleotides and it decreases the intracellular concentration of dUTP so that uracil cannot be incorporated into DNA. The polypeptide is Deoxyuridine 5'-triphosphate nucleotidohydrolase (Bordetella avium (strain 197N)).